The sequence spans 402 residues: S-adenosylmethionine synthase (402 aa).

Position 16 (His-16) interacts with ATP. Asp-18 serves as a coordination point for Mg(2+). Glu-44 is a binding site for K(+). Positions 57 and 103 each coordinate L-methionine. The interval 103–113 (QSPDIAQGVDT) is flexible loop. ATP-binding positions include 178-180 (DGK), 249-250 (KF), Asp-258, 264-265 (RK), Ala-281, and Lys-285. Asp-258 is an L-methionine binding site. Residue Lys-289 participates in L-methionine binding.

Belongs to the AdoMet synthase family. As to quaternary structure, homotetramer; dimer of dimers. Requires Mg(2+) as cofactor. K(+) is required as a cofactor.

It is found in the cytoplasm. It catalyses the reaction L-methionine + ATP + H2O = S-adenosyl-L-methionine + phosphate + diphosphate. Its pathway is amino-acid biosynthesis; S-adenosyl-L-methionine biosynthesis; S-adenosyl-L-methionine from L-methionine: step 1/1. Catalyzes the formation of S-adenosylmethionine (AdoMet) from methionine and ATP. The overall synthetic reaction is composed of two sequential steps, AdoMet formation and the subsequent tripolyphosphate hydrolysis which occurs prior to release of AdoMet from the enzyme. This is S-adenosylmethionine synthase from Mycobacterium sp. (strain JLS).